The sequence spans 146 residues: Hemoglobin subunit beta-0 (146 aa).

One can recognise a Globin domain in the interval 2-146; it reads EWTDFERATI…VVSSLGRQYH (145 aa). Positions 63 and 92 each coordinate heme b.

It belongs to the globin family. As to quaternary structure, heterotetramer of two alpha chains and two beta chains. As to expression, red blood cells.

Its function is as follows. Involved in oxygen transport from gills to the various peripheral tissues. The protein is Hemoglobin subunit beta-0 (hbb0) of Pagothenia borchgrevinki (Bald rockcod).